The sequence spans 505 residues: Probable cytochrome P450 28a5 (505 aa).

A heme-binding site is contributed by Cys450.

Belongs to the cytochrome P450 family. It depends on heme as a cofactor.

It localises to the endoplasmic reticulum membrane. Its subcellular location is the microsome membrane. In terms of biological role, may be involved in the metabolism of insect hormones and in the breakdown of synthetic insecticides. The sequence is that of Probable cytochrome P450 28a5 (Cyp28a5) from Drosophila melanogaster (Fruit fly).